Consider the following 892-residue polypeptide: Alanine--tRNA ligase (892 aa).

Zn(2+) is bound by residues His596, His600, Cys700, and His704.

Belongs to the class-II aminoacyl-tRNA synthetase family. The cofactor is Zn(2+).

It localises to the cytoplasm. The catalysed reaction is tRNA(Ala) + L-alanine + ATP = L-alanyl-tRNA(Ala) + AMP + diphosphate. In terms of biological role, catalyzes the attachment of alanine to tRNA(Ala) in a two-step reaction: alanine is first activated by ATP to form Ala-AMP and then transferred to the acceptor end of tRNA(Ala). Also edits incorrectly charged Ser-tRNA(Ala) and Gly-tRNA(Ala) via its editing domain. The chain is Alanine--tRNA ligase from Methanococcus maripaludis (strain C7 / ATCC BAA-1331).